Here is a 494-residue protein sequence, read N- to C-terminus: GPI alpha-1,6-mannosyltransferase 2 (494 aa).

Topologically, residues 1-13 (MWSLDPSQKEVLR) are cytoplasmic. The chain crosses the membrane as a helical span at residues 14–34 (FAVSCRILTLMLQALFNIIIP). Over 35 to 77 (DHHADAFSPPRLASSCSVDQLVEGLLGGLSRWDAEHFLFIAEH) the chain is Lumenal. Residues 78–98 (GYLYEHNFAFFPGFPLALLMG) form a helical membrane-spanning segment. Over 99-113 (TELLRPLQGLLSQRS) the chain is Cytoplasmic. Residues 114-134 (CLLVSVALLNFLFSVLAAVTL) form a helical membrane-spanning segment. Topologically, residues 135 to 136 (HD) are lumenal. Residues 137–157 (LGCLVLGCPRQAFYAAMLFCL) form a helical membrane-spanning segment. The Cytoplasmic segment spans residues 158-161 (SPAN). The helical transmembrane segment at 162–182 (VFLAAGYSEALFAFLTFSAMG) threads the bilayer. Topologically, residues 183-192 (QLERGRSWAS) are lumenal. A helical transmembrane segment spans residues 193-213 (GLLFALATGVRSNGLVSVGFL). The Cytoplasmic portion of the chain corresponds to 214-234 (LHAQCRGFFSSLVVLNPLKPL). Residues 235–255 (FKLMASLCLSVLTVSLPFALF) traverse the membrane as a helical segment. Over 256 to 327 (QYYAYTQFCL…RYYELRQVPN (72 aa)) the chain is Lumenal. Residues 328–348 (FLLATPVAVLVVWAAWTYVTT) form a helical membrane-spanning segment. The Cytoplasmic portion of the chain corresponds to 349–379 (HPWLCLTLGLRRSKDSKKTLEKPHPGFLSPK). The chain crosses the membrane as a helical span at residues 380-400 (VFVYLVHAAGLLLFGSLCMHV). At 401–470 (QVLTRLLCSS…NWRACSPVTR (70 aa)) the chain is on the lumenal side. Residues 471–491 (CILGYFLTYWLLGLLLHCNFL) traverse the membrane as a helical segment. Topologically, residues 492–494 (PWT) are cytoplasmic.

This sequence belongs to the PIGV family. In terms of processing, not N-glycosylated.

It is found in the endoplasmic reticulum membrane. Its pathway is glycolipid biosynthesis; glycosylphosphatidylinositol-anchor biosynthesis. Its function is as follows. Alpha-1,6-mannosyltransferase that catalyzes the transfer of the second mannose, via an alpha-1,6 bond, from a dolichol-phosphate-mannose (Dol-P-Man) to the alpha-D-Man-(1-&gt;4)-alpha-D-GlcN-(1-&gt;6)-(1-radyl,2-acyl-sn-glycero-3-phospho)-2-acyl-inositol intermediate to generate an alpha-D-Man-(1-&gt;6)-alpha-D-Man-(1-&gt;4)-alpha-D-GlcN-(1-&gt;6)-(1-radyl,2-acyl-sn-glycero-3-phospho)-2-acyl-inositol and participates in the seventh step of the glycosylphosphatidylinositol-anchor biosynthesis. Also transfers the second mannose on a 2-PEtn-alpha-D-Man-(1-&gt;4)-alpha-D-GlcN-(1-&gt;6)-(1-radyl,2-acyl-sn-glycero-3-phospho)-2-acyl-inositol. This chain is GPI alpha-1,6-mannosyltransferase 2, found in Cricetulus griseus (Chinese hamster).